Consider the following 96-residue polypeptide: Co-chaperonin GroES (96 aa).

The segment at 26–48 (LLPGSAQEKPSQGEVLATGNGQI) is disordered.

This sequence belongs to the GroES chaperonin family. As to quaternary structure, heptamer of 7 subunits arranged in a ring. Interacts with the chaperonin GroEL.

It localises to the cytoplasm. In terms of biological role, together with the chaperonin GroEL, plays an essential role in assisting protein folding. The GroEL-GroES system forms a nano-cage that allows encapsulation of the non-native substrate proteins and provides a physical environment optimized to promote and accelerate protein folding. GroES binds to the apical surface of the GroEL ring, thereby capping the opening of the GroEL channel. This Psychrobacter arcticus (strain DSM 17307 / VKM B-2377 / 273-4) protein is Co-chaperonin GroES.